Consider the following 306-residue polypeptide: Ribosomal RNA small subunit methyltransferase H (306 aa).

S-adenosyl-L-methionine-binding positions include 33–35, Asp51, Phe78, Asp96, and Gln103; that span reads GGY.

Belongs to the methyltransferase superfamily. RsmH family.

The protein localises to the cytoplasm. The enzyme catalyses cytidine(1402) in 16S rRNA + S-adenosyl-L-methionine = N(4)-methylcytidine(1402) in 16S rRNA + S-adenosyl-L-homocysteine + H(+). Specifically methylates the N4 position of cytidine in position 1402 (C1402) of 16S rRNA. The chain is Ribosomal RNA small subunit methyltransferase H from Rickettsia prowazekii (strain Madrid E).